Here is a 939-residue protein sequence, read N- to C-terminus: Translation initiation factor IF-2 (939 aa).

Disordered regions lie at residues Leu-51–Lys-81 and Val-137–Ala-353. The span at Asn-181–Lys-210 shows a compositional bias: basic and acidic residues. Low complexity predominate over residues Pro-259 to Gly-277. Residues Arg-300 to Pro-312 show a composition bias toward basic and acidic residues. In terms of domain architecture, tr-type G spans Gly-437–Lys-606. Positions Gly-446–Thr-453 are G1. GTP is bound at residue Gly-446–Thr-453. Residues Gly-471–His-475 form a G2 region. The interval Asp-492 to Gly-495 is G3. Residues Asp-492 to His-496 and Asn-546 to Asp-549 each bind GTP. The G4 stretch occupies residues Asn-546–Asp-549. The tract at residues Ser-582–Lys-584 is G5.

This sequence belongs to the TRAFAC class translation factor GTPase superfamily. Classic translation factor GTPase family. IF-2 subfamily.

It is found in the cytoplasm. Its function is as follows. One of the essential components for the initiation of protein synthesis. Protects formylmethionyl-tRNA from spontaneous hydrolysis and promotes its binding to the 30S ribosomal subunits. Also involved in the hydrolysis of GTP during the formation of the 70S ribosomal complex. This chain is Translation initiation factor IF-2, found in Desulfotalea psychrophila (strain LSv54 / DSM 12343).